A 60-amino-acid chain; its full sequence is Large ribosomal subunit protein bL32 (60 aa).

It belongs to the bacterial ribosomal protein bL32 family.

This is Large ribosomal subunit protein bL32 from Fervidobacterium nodosum (strain ATCC 35602 / DSM 5306 / Rt17-B1).